The chain runs to 209 residues: MVKVNIIFYSMYGHVYRMAEAVAAGAREVEGAEVGIYQVPETLPEEVLEKMGAIETKKLFAHIPVLTREMNEEVLAGADALIFGTPTRYGNMTAQMRAVLDGLGGLWNRDAFVGKVGSVFTSSGTQHGGQESTILTFHVTLLHLGMILVGLPYSEKRQTRMDEITGGSPYGVSTIAGGDGSRQPSENELAMARYQGRHVTLIAKKIAGK.

The region spanning 4 to 199 (VNIIFYSMYG…AMARYQGRHV (196 aa)) is the Flavodoxin-like domain. FMN contacts are provided by residues 10 to 15 (SMYGHV) and 87 to 89 (TRY). Residue tyrosine 12 coordinates NAD(+). Tryptophan 107 serves as a coordination point for substrate. FMN contacts are provided by residues 122 to 128 (SSGTQHG) and histidine 143.

This sequence belongs to the WrbA family. Requires FMN as cofactor.

It carries out the reaction a quinone + NADH + H(+) = a quinol + NAD(+). It catalyses the reaction a quinone + NADPH + H(+) = a quinol + NADP(+). The polypeptide is NAD(P)H dehydrogenase (quinone) (Methanosarcina acetivorans (strain ATCC 35395 / DSM 2834 / JCM 12185 / C2A)).